The chain runs to 74 residues: Hadrucalcin (74 aa).

Residues 1–27 (MKTSSLTIIFIAVIITIICLNIHDIEA) form the signal peptide. Positions 28 to 39 (REIEFNAGRVVR) are excised as a propeptide. Intrachain disulfides connect Cys-44–Cys-58, Cys-51–Cys-62, and Cys-57–Cys-73. An essential for stimulation of [3H]ryanodine binding to RYR1 region spans residues 64–65 (RR).

As to expression, expressed by the venom gland.

Its subcellular location is the secreted. In terms of biological role, this toxin activates ryanodine receptors RyR1 and RyR2 by inducing a long-lasting subconductance state (35% of the full conductance stateon RyR1). Furthermore, it triggers calcium release from sarcoplasmic vesicles (11.8 nM are enough to induce a sharp release on RyR1, and 55% of the total calcium is released after toxin (100 nM) addition on RyR1) probably by acting as a cell-penetrating peptide (CPP). In addition, it has been shown to dose-dependently stimulate ryanodine binding to RyR1 (EC(50)=14.8 nM). It also augments the bell-shaped calcium-[3H]ryanodine binding curve that is maximal at about 10 uM calcium concentration. It binds a different site as ryanodine. It acts synergistically with caffeine. In vivo, intracerebroventricular injection into mice induces neurotoxic symptoms, followed by death. The sequence is that of Hadrucalcin from Hoffmannihadrurus gertschi (Scorpion).